Reading from the N-terminus, the 1391-residue chain is MNLLNLFNPLQTAGMEEEFDAIKIGIASPETIRSWSYGEVKKPETINYRTFKPERDGLFCAKIFGPVKDYECLCGKYKRLKFKGVTCEKCGVEVTLSKVRRERMGHIELAAPVAHIWFLKSLPSRLGMVLNMTLRDIERVLYFEAFVVTDPGMTPLQRRQLLTEDDYYNKLDEYGDDFDAKMGAEGIRELLRTLDVAGEIEILRQELESTGSDTKIKKIAKRLKVLEAFHRSGMKLEWMIMDVLPVLPPDLRPLVPLDGGRFATSDLNDLYRRVINRNNRLKRLLELHAPDIIVRNEKRMLQEAVDSLLDNGRRGKAMTGANKRPLKSLADMIKGKGGRFRQNLLGKRVDYSGRSVITVGPYLRLHQCGLPKKMALELFKPFIFHKLEKQGLASTVKAAKKLVEQEVPEVWDILEEVIREHPIMLNRAPTLHRLGIQAFEPILIEGKAIQLHPLVCAAFNADFDGDQMAVHVPLSLEAQMEARTLMLASNNVLSPANGEPIIVPSQDIVLGLYYMTRDRINAKGEGSLFADVKEVHRAYHTKQVELGTKITVRLREWVKNEAGEFEPVVNRYETTVGRALLSEILPKGLPFEYVNKALKKKEISKLINASFRLCGLRDTVIFADHLMYTGFGFAAKGGISIAVDDMEIPKEKAALLAEANAEVKEIEDQYRQGLVTNGERYNKVVDIWGRAGDKIAKAMMDNLSKQKVIDRDGNEVDQESFNSIYMMADSGARGSAAQIKQLSGMRGLMAKPDGSIIETPITSNFREGLTVLQYFIATHGARKGLADTALKTANSGYLTRRLVDVTQDLVVVEDDCGTSDGFVMKAVVQGGDVIEALRDRILGRVTASDVVDPSSGETLVEAGTLLTEKLVDMIDQSGVDEVKVRTPITCKTRHGLCAHCYGRDLARGKLVNAGEAVGVIAAQSIGEPGTQLTMRTFHIGGAASRAAAASQVEAKSNGTARFSSQMRYVANNKGELVVIGRSCEVVIHDDIGRERERHKVPYGAILLVQDGMAIKAGQTLATWDPHTRPMITEHAGMVKFENMEEGVTVAKQTDDVTGLSTLVVIDGKRRSSSASKLLRPTVKLLDENGVEICIPGTSTPVSMAFPVGAVITVREGQEIGKGDVLARIPQASSKTRDITGGLPRVAELFEARVPKDAGMLAEITGTVSFGKETKGKQRLIITDVDGVAYETLISKEKQILVHDGQVVNRGETIVDGAVDPHDILRLQGIEALARYIVQEVQEVYRLQGVKISDKHIEVIIRQMLRRVNIADAGETGFITGEQVERGDVMAANEKALEEGKEPARYENILLGITKASLSTDSFISAASFQETTRVLTEAAIMGKQDELRGLKENVIVGRLIPAGTGLTYHRSRHQQWQGVEQETAETQVTDE.

Positions 72, 74, 87, and 90 each coordinate Zn(2+). Mg(2+)-binding residues include Asp-462, Asp-464, and Asp-466. Cys-816, Cys-890, Cys-897, and Cys-900 together coordinate Zn(2+).

This sequence belongs to the RNA polymerase beta' chain family. In terms of assembly, the RNAP catalytic core consists of 2 alpha, 1 beta, 1 beta' and 1 omega subunit. When a sigma factor is associated with the core the holoenzyme is formed, which can initiate transcription. Mg(2+) is required as a cofactor. The cofactor is Zn(2+).

The catalysed reaction is RNA(n) + a ribonucleoside 5'-triphosphate = RNA(n+1) + diphosphate. In terms of biological role, DNA-dependent RNA polymerase catalyzes the transcription of DNA into RNA using the four ribonucleoside triphosphates as substrates. The polypeptide is DNA-directed RNA polymerase subunit beta' (Neisseria gonorrhoeae (strain ATCC 700825 / FA 1090)).